The following is a 318-amino-acid chain: sn-1 stearoyl-lipid 9-desaturase (318 aa).

Helical transmembrane passes span valine 56–phenylalanine 76 and alanine 80–phenylalanine 100. The short motif at histidine 101–histidine 106 is the Histidine box-1 element. Residues tyrosine 117–leucine 137 traverse the membrane as a helical segment. The Histidine box-2 motif lies at histidine 138 to histidine 142. A helical membrane pass occupies residues valine 201–phenylalanine 221. The Histidine box-3 signature appears at histidine 271–glutamine 275.

This sequence belongs to the fatty acid desaturase type 2 family. Requires Fe(2+) as cofactor.

The protein resides in the cellular thylakoid membrane. It carries out the reaction a 1-octadecanoyl 2-acyl-glycerolipid + 2 reduced [2Fe-2S]-[ferredoxin] + O2 + 2 H(+) = a 1-[(9Z)-octadecenoyl]-2-acyl-glycerolipid + 2 oxidized [2Fe-2S]-[ferredoxin] + 2 H2O. The protein operates within lipid metabolism; polyunsaturated fatty acid biosynthesis. Its function is as follows. Desaturase involved in fatty acid biosynthesis. Introduces a double bond at carbon 9 of stearoyl groups (18:0) attached to the sn-1 position of the glycerol moiety of membrane glycerolipids. Does not desaturate palmitic acid (16:0), palmitoleic acid (16:1) and cis-vaccenic acid (18:1). In Synechocystis sp. (strain ATCC 27184 / PCC 6803 / Kazusa), this protein is sn-1 stearoyl-lipid 9-desaturase.